A 701-amino-acid chain; its full sequence is Elongation factor G (701 aa).

Residues 8–290 (ERYRNIGISA…AVVDYLPAPT (283 aa)) form the tr-type G domain. GTP is bound by residues 17-24 (AHIDAGKT), 88-92 (DTPGH), and 142-145 (NKMD).

The protein belongs to the TRAFAC class translation factor GTPase superfamily. Classic translation factor GTPase family. EF-G/EF-2 subfamily.

The protein localises to the cytoplasm. Functionally, catalyzes the GTP-dependent ribosomal translocation step during translation elongation. During this step, the ribosome changes from the pre-translocational (PRE) to the post-translocational (POST) state as the newly formed A-site-bound peptidyl-tRNA and P-site-bound deacylated tRNA move to the P and E sites, respectively. Catalyzes the coordinated movement of the two tRNA molecules, the mRNA and conformational changes in the ribosome. This chain is Elongation factor G, found in Aeromonas hydrophila subsp. hydrophila (strain ATCC 7966 / DSM 30187 / BCRC 13018 / CCUG 14551 / JCM 1027 / KCTC 2358 / NCIMB 9240 / NCTC 8049).